The primary structure comprises 158 residues: NAD(P)H-quinone oxidoreductase subunit J, chloroplastic (158 aa).

This sequence belongs to the complex I 30 kDa subunit family. NDH is composed of at least 16 different subunits, 5 of which are encoded in the nucleus.

It is found in the plastid. Its subcellular location is the chloroplast thylakoid membrane. It carries out the reaction a plastoquinone + NADH + (n+1) H(+)(in) = a plastoquinol + NAD(+) + n H(+)(out). It catalyses the reaction a plastoquinone + NADPH + (n+1) H(+)(in) = a plastoquinol + NADP(+) + n H(+)(out). NDH shuttles electrons from NAD(P)H:plastoquinone, via FMN and iron-sulfur (Fe-S) centers, to quinones in the photosynthetic chain and possibly in a chloroplast respiratory chain. The immediate electron acceptor for the enzyme in this species is believed to be plastoquinone. Couples the redox reaction to proton translocation, and thus conserves the redox energy in a proton gradient. This Lemna minor (Common duckweed) protein is NAD(P)H-quinone oxidoreductase subunit J, chloroplastic.